Consider the following 327-residue polypeptide: Flap endonuclease 1 (327 aa).

An N-domain region spans residues 1 to 100; the sequence is MGNADLRQLA…DEIADRREQR (100 aa). Residues Asp28, Asp82, Glu154, Glu156, Asp176, Asp178, and Asp226 each coordinate Mg(2+). Residues 118 to 247 form an I-domain region; that stretch reads EAARLDARTQ…TALDAIGEHG (130 aa). An interaction with PCNA region spans residues 319–327; sequence AQTGLDRWT.

The protein belongs to the XPG/RAD2 endonuclease family. FEN1 subfamily. As to quaternary structure, interacts with PCNA. PCNA stimulates the nuclease activity without altering cleavage specificity. The cofactor is Mg(2+).

Functionally, structure-specific nuclease with 5'-flap endonuclease and 5'-3' exonuclease activities involved in DNA replication and repair. During DNA replication, cleaves the 5'-overhanging flap structure that is generated by displacement synthesis when DNA polymerase encounters the 5'-end of a downstream Okazaki fragment. Binds the unpaired 3'-DNA end and kinks the DNA to facilitate 5' cleavage specificity. Cleaves one nucleotide into the double-stranded DNA from the junction in flap DNA, leaving a nick for ligation. Also involved in the base excision repair (BER) pathway. Acts as a genome stabilization factor that prevents flaps from equilibrating into structures that lead to duplications and deletions. Also possesses 5'-3' exonuclease activity on nicked or gapped double-stranded DNA. This chain is Flap endonuclease 1, found in Halobacterium salinarum (strain ATCC 29341 / DSM 671 / R1).